A 263-amino-acid polypeptide reads, in one-letter code: Zinc import ATP-binding protein ZnuC (263 aa).

The region spanning 11 to 226 (VELKNINVVF…PTFIHFFGDQ (216 aa)) is the ABC transporter domain. Residue 43–50 (GPNGGGKS) participates in ATP binding.

The protein belongs to the ABC transporter superfamily. Zinc importer (TC 3.A.1.15.5) family. In terms of assembly, the complex is composed of two ATP-binding proteins (ZnuC), two transmembrane proteins (ZnuB) and a solute-binding protein (ZnuA).

It localises to the cell inner membrane. It catalyses the reaction Zn(2+)(out) + ATP(in) + H2O(in) = Zn(2+)(in) + ADP(in) + phosphate(in) + H(+)(in). In terms of biological role, part of the ABC transporter complex ZnuABC involved in zinc import. Responsible for energy coupling to the transport system. The protein is Zinc import ATP-binding protein ZnuC of Pasteurella multocida (strain Pm70).